A 205-amino-acid polypeptide reads, in one-letter code: Small ribosomal subunit protein uS4 (205 aa).

The interval 18 to 49 is disordered; it reads NIWGRPKSPVNKREYGPGQHGQRRKGKLSDFG. In terms of domain architecture, S4 RNA-binding spans 94 to 157; sequence RRLDTVVYRA…KQLALVLEAN (64 aa).

Belongs to the universal ribosomal protein uS4 family. As to quaternary structure, part of the 30S ribosomal subunit. Contacts protein S5. The interaction surface between S4 and S5 is involved in control of translational fidelity.

Its function is as follows. One of the primary rRNA binding proteins, it binds directly to 16S rRNA where it nucleates assembly of the body of the 30S subunit. In terms of biological role, with S5 and S12 plays an important role in translational accuracy. The protein is Small ribosomal subunit protein uS4 of Nitrobacter hamburgensis (strain DSM 10229 / NCIMB 13809 / X14).